The chain runs to 303 residues: MPKLQLRSLASQDKIEEIFERFKPHAVIHTASPSYMDTKKTLMSKNVDGTKALLEAARTCSDTKAFVFTSSDEAIMPTQEPTSEENAHRYDENNAPNAPNTYALSKALAKRLVIAANSEELYTSVIRIPGIYGKYDDNFIPQLVSSMREKEHKMQVGNNTKVFEFLYVNKAAEAHIMAMKALLNPSTRDQVGGEDFFISDGKPQGLFDFCRRIYAAAGSPVRPEEVTSIPLSVMQTMASTMEWVYWVFTLGTVQPSLRRISMDHLDTGCCWSLDKARRILGYEPVQDQDKVIERTMDWTMKTF.

NADP(+)-binding positions include S8–L9 and T30–S32. Position 71 (S71) interacts with substrate. Residues P77–P96 are disordered. Residues Y102, K106, and I128–I131 each bind NADP(+). Residue Y102 participates in substrate binding. K106 (proton donor) is an active-site residue.

It belongs to the 3-beta-HSD family. In terms of assembly, heterotetramer of ERG25, ERG26, ERG27 and ERG28. ERG28 acts as a scaffold to tether ERG27 and other 4,4-demethylation-related enzymes, forming a demethylation enzyme complex, in the endoplasmic reticulum.

It localises to the endoplasmic reticulum membrane. It participates in steroid metabolism; ergosterol biosynthesis. In terms of biological role, sterol-4-alpha-carboxylate 3-dehydrogenase; part of the third module of ergosterol biosynthesis pathway that includes the late steps of the pathway. ERG26 is a catalytic component of the C-4 demethylation complex that catalyzes the conversion of 4,4-dimethylfecosterol into fecosterol via 4-methylfecosterol. The third module or late pathway involves the ergosterol synthesis itself through consecutive reactions that mainly occur in the endoplasmic reticulum (ER) membrane. Firstly, the squalene synthase ERG9 catalyzes the condensation of 2 farnesyl pyrophosphate moieties to form squalene, which is the precursor of all steroids. Squalene synthase is crucial for balancing the incorporation of farnesyl diphosphate (FPP) into sterol and nonsterol isoprene synthesis. Secondly, squalene is converted into lanosterol by the consecutive action of the squalene epoxidase ERG1 and the lanosterol synthase ERG7. Then, the delta(24)-sterol C-methyltransferase ERG6 methylates lanosterol at C-24 to produce eburicol. Eburicol is the substrate of the sterol 14-alpha demethylase encoded by CYP51A, CYP51B and CYP51C, to yield 4,4,24-trimethyl ergosta-8,14,24(28)-trienol. CYP51B encodes the enzyme primarily responsible for sterol 14-alpha-demethylation, and plays an essential role in ascospore formation. CYP51A encodes an additional sterol 14-alpha-demethylase, induced on ergosterol depletion and responsible for the intrinsic variation in azole sensitivity. The third CYP51 isoform, CYP51C, does not encode a sterol 14-alpha-demethylase, but is required for full virulence on host wheat ears. The C-14 reductase ERG24 then reduces the C14=C15 double bond which leads to 4,4-dimethylfecosterol. A sequence of further demethylations at C-4, involving the C-4 demethylation complex containing the C-4 methylsterol oxidases ERG25, the sterol-4-alpha-carboxylate 3-dehydrogenase ERG26 and the 3-keto-steroid reductase ERG27, leads to the production of fecosterol via 4-methylfecosterol. ERG28 has a role as a scaffold to help anchor ERG25, ERG26 and ERG27 to the endoplasmic reticulum. The C-8 sterol isomerase ERG2 then catalyzes the reaction which results in unsaturation at C-7 in the B ring of sterols and thus converts fecosterol to episterol. The sterol-C5-desaturases ERG3A and ERG3BB then catalyze the introduction of a C-5 double bond in the B ring to produce 5-dehydroepisterol. The C-22 sterol desaturases ERG5A and ERG5B further convert 5-dehydroepisterol into ergosta-5,7,22,24(28)-tetraen-3beta-ol by forming the C-22(23) double bond in the sterol side chain. Finally, ergosta-5,7,22,24(28)-tetraen-3beta-ol is substrate of the C-24(28) sterol reductase ERG4 to produce ergosterol. This chain is Sterol-4-alpha-carboxylate 3-dehydrogenase ERG26, decarboxylating, found in Gibberella zeae (strain ATCC MYA-4620 / CBS 123657 / FGSC 9075 / NRRL 31084 / PH-1) (Wheat head blight fungus).